The chain runs to 499 residues: Aspartyl/glutamyl-tRNA(Asn/Gln) amidotransferase subunit B (499 aa).

This sequence belongs to the GatB/GatE family. GatB subfamily. Heterotrimer of A, B and C subunits.

It catalyses the reaction L-glutamyl-tRNA(Gln) + L-glutamine + ATP + H2O = L-glutaminyl-tRNA(Gln) + L-glutamate + ADP + phosphate + H(+). The catalysed reaction is L-aspartyl-tRNA(Asn) + L-glutamine + ATP + H2O = L-asparaginyl-tRNA(Asn) + L-glutamate + ADP + phosphate + 2 H(+). In terms of biological role, allows the formation of correctly charged Asn-tRNA(Asn) or Gln-tRNA(Gln) through the transamidation of misacylated Asp-tRNA(Asn) or Glu-tRNA(Gln) in organisms which lack either or both of asparaginyl-tRNA or glutaminyl-tRNA synthetases. The reaction takes place in the presence of glutamine and ATP through an activated phospho-Asp-tRNA(Asn) or phospho-Glu-tRNA(Gln). This Bartonella tribocorum (strain CIP 105476 / IBS 506) protein is Aspartyl/glutamyl-tRNA(Asn/Gln) amidotransferase subunit B.